The following is a 208-amino-acid chain: Uracil phosphoribosyltransferase (208 aa).

5-phospho-alpha-D-ribose 1-diphosphate-binding positions include Arg-78, Arg-103, and 130–138 (DPMLATGGS). Uracil contacts are provided by residues Ile-193 and 198–200 (GDA). Asp-199 contributes to the 5-phospho-alpha-D-ribose 1-diphosphate binding site.

This sequence belongs to the UPRTase family. Requires Mg(2+) as cofactor.

It catalyses the reaction UMP + diphosphate = 5-phospho-alpha-D-ribose 1-diphosphate + uracil. It participates in pyrimidine metabolism; UMP biosynthesis via salvage pathway; UMP from uracil: step 1/1. With respect to regulation, allosterically activated by GTP. Catalyzes the conversion of uracil and 5-phospho-alpha-D-ribose 1-diphosphate (PRPP) to UMP and diphosphate. The chain is Uracil phosphoribosyltransferase from Pectobacterium atrosepticum (strain SCRI 1043 / ATCC BAA-672) (Erwinia carotovora subsp. atroseptica).